Reading from the N-terminus, the 426-residue chain is Glutamate-1-semialdehyde 2,1-aminomutase (426 aa).

Lysine 265 is modified (N6-(pyridoxal phosphate)lysine).

This sequence belongs to the class-III pyridoxal-phosphate-dependent aminotransferase family. HemL subfamily. As to quaternary structure, homodimer. The cofactor is pyridoxal 5'-phosphate.

The protein resides in the cytoplasm. It catalyses the reaction (S)-4-amino-5-oxopentanoate = 5-aminolevulinate. The protein operates within porphyrin-containing compound metabolism; protoporphyrin-IX biosynthesis; 5-aminolevulinate from L-glutamyl-tRNA(Glu): step 2/2. This chain is Glutamate-1-semialdehyde 2,1-aminomutase, found in Methylococcus capsulatus (strain ATCC 33009 / NCIMB 11132 / Bath).